An 806-amino-acid chain; its full sequence is Leucine--tRNA ligase (806 aa).

The 'HIGH' region signature appears at 38–48 (PYPSGEIHMGH). The 'KMSKS' region motif lies at 572-576 (KMSKS). Residue K575 coordinates ATP.

The protein belongs to the class-I aminoacyl-tRNA synthetase family.

It is found in the cytoplasm. The enzyme catalyses tRNA(Leu) + L-leucine + ATP = L-leucyl-tRNA(Leu) + AMP + diphosphate. The sequence is that of Leucine--tRNA ligase from Helicobacter pylori (strain HPAG1).